The following is a 242-amino-acid chain: tRNA (guanine-N(1)-)-methyltransferase (242 aa).

S-adenosyl-L-methionine contacts are provided by residues Gly-108 and 127-132; that span reads IGDYVL.

Belongs to the RNA methyltransferase TrmD family. Homodimer.

The protein localises to the cytoplasm. It carries out the reaction guanosine(37) in tRNA + S-adenosyl-L-methionine = N(1)-methylguanosine(37) in tRNA + S-adenosyl-L-homocysteine + H(+). In terms of biological role, specifically methylates guanosine-37 in various tRNAs. This chain is tRNA (guanine-N(1)-)-methyltransferase, found in Lactobacillus acidophilus (strain ATCC 700396 / NCK56 / N2 / NCFM).